The sequence spans 324 residues: ATP synthase subunit a 2 (324 aa).

Positions 1-33 are cleaved as a signal peptide; it reads MKRVNVFRSGVFSRLFALLLPFLLGINGLVYAS. Transmembrane regions (helical) follow at residues 95–115, 157–177, 179–199, 224–244, 257–277, and 291–311; these read HVVM…LVGN, LPYL…GLVP, GATA…TFFI, ALWI…PFAL, IVIL…VAMF, and IFVA…FIGL.

Belongs to the ATPase A chain family. F-type ATPases have 2 components, CF(1) - the catalytic core - and CF(0) - the membrane proton channel. CF(1) has five subunits: alpha(3), beta(3), gamma(1), delta(1), epsilon(1). CF(0) has four main subunits: a, b, b' and c.

It is found in the cell inner membrane. Key component of the proton channel; it plays a direct role in the translocation of protons across the membrane. In Prosthecochloris aestuarii (strain DSM 271 / SK 413), this protein is ATP synthase subunit a 2.